A 343-amino-acid chain; its full sequence is Probable dual-specificity RNA methyltransferase RlmN (343 aa).

Glu-91 acts as the Proton acceptor in catalysis. The region spanning 97-326 (HPDRITACIS…AEIRREKGAD (230 aa)) is the Radical SAM core domain. The cysteines at positions 104 and 331 are disulfide-linked. Residues Cys-111, Cys-115, and Cys-118 each contribute to the [4Fe-4S] cluster site. Residues 158-159 (GE), Ser-190, 213-215 (SLH), and Asn-289 contribute to the S-adenosyl-L-methionine site. The active-site S-methylcysteine intermediate is the Cys-331.

The protein belongs to the radical SAM superfamily. RlmN family. [4Fe-4S] cluster serves as cofactor.

The protein localises to the cytoplasm. It carries out the reaction adenosine(2503) in 23S rRNA + 2 reduced [2Fe-2S]-[ferredoxin] + 2 S-adenosyl-L-methionine = 2-methyladenosine(2503) in 23S rRNA + 5'-deoxyadenosine + L-methionine + 2 oxidized [2Fe-2S]-[ferredoxin] + S-adenosyl-L-homocysteine. It catalyses the reaction adenosine(37) in tRNA + 2 reduced [2Fe-2S]-[ferredoxin] + 2 S-adenosyl-L-methionine = 2-methyladenosine(37) in tRNA + 5'-deoxyadenosine + L-methionine + 2 oxidized [2Fe-2S]-[ferredoxin] + S-adenosyl-L-homocysteine. Specifically methylates position 2 of adenine 2503 in 23S rRNA and position 2 of adenine 37 in tRNAs. The polypeptide is Probable dual-specificity RNA methyltransferase RlmN (Thermotoga petrophila (strain ATCC BAA-488 / DSM 13995 / JCM 10881 / RKU-1)).